The sequence spans 91 residues: Small ribosomal subunit protein bS16 (91 aa).

Belongs to the bacterial ribosomal protein bS16 family.

This chain is Small ribosomal subunit protein bS16, found in Limosilactobacillus reuteri (strain DSM 20016) (Lactobacillus reuteri).